Consider the following 159-residue polypeptide: MTSEDQSLKKQKLESTQSLKVYLRSPKGKVPTKGSALAAGYDLYSAEAATIPAHGQGLVSTDISIIVPIGTYGRVAPRSGLAVKHGISTGAGVIDADYRGEVKVVLFNHSEKDFEIKEGDRIAQLVLEQIVNADIKEISLEELDNTERGEGGFGSTGKN.

Positions 79, 92, 95, 98, 103, 148, 153, and 154 each coordinate dUMP.

Belongs to the dUTPase family. In terms of assembly, homotrimer. Requires Mg(2+) as cofactor.

The enzyme catalyses dUTP + H2O = dUMP + diphosphate + H(+). The protein operates within pyrimidine metabolism; dUMP biosynthesis; dUMP from dCTP (dUTP route): step 2/2. Involved in nucleotide metabolism via production of dUMP, the immediate precursor of thymidine nucleotides, and decreases the intracellular concentration of dUTP so that uracil cannot be incorporated into DNA. In Candida albicans (strain SC5314 / ATCC MYA-2876) (Yeast), this protein is Deoxyuridine 5'-triphosphate nucleotidohydrolase (DUT1).